We begin with the raw amino-acid sequence, 256 residues long: Probable ABC transporter ATP-binding protein SPy_0285/M5005_Spy0242 (256 aa).

An ABC transporter domain is found at 4-246 (LEINNLHVSI…EKEGYAGIAQ (243 aa)). Position 36–43 (36–43 (GPNGTGKS)) interacts with ATP.

Belongs to the ABC transporter superfamily. Ycf16 family.

Its subcellular location is the cell membrane. This chain is Probable ABC transporter ATP-binding protein SPy_0285/M5005_Spy0242, found in Streptococcus pyogenes serotype M1.